Reading from the N-terminus, the 187-residue chain is dCTP deaminase (187 aa).

DCTP contacts are provided by residues 110–115 (KSTYAR), 134–136 (TLE), Q155, Y169, and Q179. E136 (proton donor/acceptor) is an active-site residue.

It belongs to the dCTP deaminase family. Homotrimer.

It carries out the reaction dCTP + H2O + H(+) = dUTP + NH4(+). It participates in pyrimidine metabolism; dUMP biosynthesis; dUMP from dCTP (dUTP route): step 1/2. Its function is as follows. Catalyzes the deamination of dCTP to dUTP. In Bordetella bronchiseptica (strain ATCC BAA-588 / NCTC 13252 / RB50) (Alcaligenes bronchisepticus), this protein is dCTP deaminase.